Here is a 365-residue protein sequence, read N- to C-terminus: 3-isopropylmalate dehydrogenase (365 aa).

Substrate-binding residues include arginine 96, arginine 106, arginine 134, and aspartate 224. Aspartate 224, aspartate 248, and aspartate 252 together coordinate Mg(2+). An NAD(+)-binding site is contributed by 288–300; it reads GSAPTIAKQNIAN.

Belongs to the isocitrate and isopropylmalate dehydrogenases family. LeuB type 1 subfamily. Homodimer. Mg(2+) serves as cofactor. Mn(2+) is required as a cofactor.

It is found in the cytoplasm. It catalyses the reaction (2R,3S)-3-isopropylmalate + NAD(+) = 4-methyl-2-oxopentanoate + CO2 + NADH. It participates in amino-acid biosynthesis; L-leucine biosynthesis; L-leucine from 3-methyl-2-oxobutanoate: step 3/4. Functionally, catalyzes the oxidation of 3-carboxy-2-hydroxy-4-methylpentanoate (3-isopropylmalate) to 3-carboxy-4-methyl-2-oxopentanoate. The product decarboxylates to 4-methyl-2 oxopentanoate. The polypeptide is 3-isopropylmalate dehydrogenase (Dehalococcoides mccartyi (strain ATCC BAA-2266 / KCTC 15142 / 195) (Dehalococcoides ethenogenes (strain 195))).